A 486-amino-acid chain; its full sequence is Glutamyl-tRNA(Gln) amidotransferase subunit A (486 aa).

Active-site charge relay system residues include K75 and S150. Residue S174 is the Acyl-ester intermediate of the active site.

This sequence belongs to the amidase family. GatA subfamily. In terms of assembly, heterotrimer of A, B and C subunits.

The enzyme catalyses L-glutamyl-tRNA(Gln) + L-glutamine + ATP + H2O = L-glutaminyl-tRNA(Gln) + L-glutamate + ADP + phosphate + H(+). Functionally, allows the formation of correctly charged Gln-tRNA(Gln) through the transamidation of misacylated Glu-tRNA(Gln) in organisms which lack glutaminyl-tRNA synthetase. The reaction takes place in the presence of glutamine and ATP through an activated gamma-phospho-Glu-tRNA(Gln). The polypeptide is Glutamyl-tRNA(Gln) amidotransferase subunit A (Nostoc sp. (strain PCC 7120 / SAG 25.82 / UTEX 2576)).